Consider the following 146-residue polypeptide: Ribosome maturation factor RimP (146 aa).

It belongs to the RimP family.

The protein localises to the cytoplasm. In terms of biological role, required for maturation of 30S ribosomal subunits. The polypeptide is Ribosome maturation factor RimP (Helicobacter pylori (strain Shi470)).